The primary structure comprises 76 residues: Adropin (76 aa).

An N-terminal signal peptide occupies residues 1-33 (MGAAISQGALIAIVCNGLVGFLLLLLWVILCWA). The segment at 41–76 (VDSLSESSPNSSPGPCPEKAPPPQKPSHEGSYLLQP) is disordered. The span at 52–65 (SPGPCPEKAPPPQK) shows a compositional bias: pro residues.

In terms of tissue distribution, expressed in liver and brain.

It localises to the secreted. Its function is as follows. Involved in the regulation of glucose homeostasis and lipid metabolism. The chain is Adropin (ENHO) from Homo sapiens (Human).